Reading from the N-terminus, the 168-residue chain is Peptide deformylase 1 (168 aa).

Residues cysteine 91 and histidine 133 each coordinate Fe cation. The active site involves glutamate 134. Histidine 137 lines the Fe cation pocket.

The protein belongs to the polypeptide deformylase family. The cofactor is Fe(2+).

It carries out the reaction N-terminal N-formyl-L-methionyl-[peptide] + H2O = N-terminal L-methionyl-[peptide] + formate. Removes the formyl group from the N-terminal Met of newly synthesized proteins. Requires at least a dipeptide for an efficient rate of reaction. N-terminal L-methionine is a prerequisite for activity but the enzyme has broad specificity at other positions. In Shewanella oneidensis (strain ATCC 700550 / JCM 31522 / CIP 106686 / LMG 19005 / NCIMB 14063 / MR-1), this protein is Peptide deformylase 1.